The sequence spans 127 residues: Small ribosomal subunit protein uS12 (127 aa).

D89 carries the 3-methylthioaspartic acid modification. A disordered region spans residues 101-127 (ALDTSGVAGRTQRRSKYGAKRPKEAKK). The span at 111 to 127 (TQRRSKYGAKRPKEAKK) shows a compositional bias: basic residues.

Belongs to the universal ribosomal protein uS12 family. As to quaternary structure, part of the 30S ribosomal subunit. Contacts proteins S8 and S17. May interact with IF1 in the 30S initiation complex.

Its function is as follows. With S4 and S5 plays an important role in translational accuracy. Functionally, interacts with and stabilizes bases of the 16S rRNA that are involved in tRNA selection in the A site and with the mRNA backbone. Located at the interface of the 30S and 50S subunits, it traverses the body of the 30S subunit contacting proteins on the other side and probably holding the rRNA structure together. The combined cluster of proteins S8, S12 and S17 appears to hold together the shoulder and platform of the 30S subunit. This chain is Small ribosomal subunit protein uS12, found in Flavobacterium psychrophilum (strain ATCC 49511 / DSM 21280 / CIP 103535 / JIP02/86).